The primary structure comprises 303 residues: Phosphatidylglycerol--prolipoprotein diacylglyceryl transferase (303 aa).

The next 4 membrane-spanning stretches (helical) occupy residues 18–38, 58–78, 106–126, and 133–153; these read LGPF…LVGL, LLPI…VAFE, IWGG…SIIF, and EHFW…QAIG. Residue Arg154 coordinates a 1,2-diacyl-sn-glycero-3-phospho-(1'-sn-glycerol). A run of 3 helical transmembrane segments spans residues 193 to 213, 223 to 243, and 266 to 286; these read PTFL…IFLF, LPPG…RFWI, and IAQL…WRIY.

Belongs to the Lgt family.

The protein localises to the cell inner membrane. It carries out the reaction L-cysteinyl-[prolipoprotein] + a 1,2-diacyl-sn-glycero-3-phospho-(1'-sn-glycerol) = an S-1,2-diacyl-sn-glyceryl-L-cysteinyl-[prolipoprotein] + sn-glycerol 1-phosphate + H(+). It functions in the pathway protein modification; lipoprotein biosynthesis (diacylglyceryl transfer). Its function is as follows. Catalyzes the transfer of the diacylglyceryl group from phosphatidylglycerol to the sulfhydryl group of the N-terminal cysteine of a prolipoprotein, the first step in the formation of mature lipoproteins. This is Phosphatidylglycerol--prolipoprotein diacylglyceryl transferase from Prochlorococcus marinus (strain NATL2A).